Consider the following 139-residue polypeptide: uncharacterized protein (139 aa).

The protein resides in the mitochondrion. This is an uncharacterized protein from Marchantia polymorpha (Common liverwort).